Consider the following 321-residue polypeptide: D-alanine--D-alanine ligase (321 aa).

An ATP-grasp domain is found at 121 to 315 (RSWFLTNNIN…FVNLIEEILK (195 aa)). 148-199 (IKRPYVIKPFTQGSSIGVEVIFEEDDFNFANYDFPYGDEVIIEKYIKGRELQ) serves as a coordination point for ATP. Glutamate 268, glutamate 282, and asparagine 284 together coordinate Mg(2+).

It belongs to the D-alanine--D-alanine ligase family. The cofactor is Mg(2+). Mn(2+) is required as a cofactor.

Its subcellular location is the cytoplasm. The catalysed reaction is 2 D-alanine + ATP = D-alanyl-D-alanine + ADP + phosphate + H(+). It functions in the pathway cell wall biogenesis; peptidoglycan biosynthesis. Functionally, cell wall formation. The protein is D-alanine--D-alanine ligase of Rickettsia bellii (strain OSU 85-389).